Here is a 466-residue protein sequence, read N- to C-terminus: L-seryl-tRNA(Sec) selenium transferase (466 aa).

The residue at position 293 (Lys293) is an N6-(pyridoxal phosphate)lysine.

It belongs to the SelA family. Requires pyridoxal 5'-phosphate as cofactor.

The protein resides in the cytoplasm. The catalysed reaction is L-seryl-tRNA(Sec) + selenophosphate + H(+) = L-selenocysteinyl-tRNA(Sec) + phosphate. Its pathway is aminoacyl-tRNA biosynthesis; selenocysteinyl-tRNA(Sec) biosynthesis; selenocysteinyl-tRNA(Sec) from L-seryl-tRNA(Sec) (bacterial route): step 1/1. Converts seryl-tRNA(Sec) to selenocysteinyl-tRNA(Sec) required for selenoprotein biosynthesis. The sequence is that of L-seryl-tRNA(Sec) selenium transferase from Desulfotalea psychrophila (strain LSv54 / DSM 12343).